The sequence spans 105 residues: Small ribosomal subunit protein uS10 (105 aa).

This sequence belongs to the universal ribosomal protein uS10 family. As to quaternary structure, part of the 30S ribosomal subunit.

Involved in the binding of tRNA to the ribosomes. The chain is Small ribosomal subunit protein uS10 from Chlamydia pneumoniae (Chlamydophila pneumoniae).